The primary structure comprises 371 residues: Riboflavin biosynthesis protein RibD (371 aa).

Residues 1 to 122 (MEEYYMNTAI…MLEEAGIEVK (122 aa)) form the CMP/dCMP-type deaminase domain. Residues 1–144 (MEEYYMNTAI…KMFLHFMRTG (144 aa)) are deaminase. Histidine 49 contacts Zn(2+). Glutamate 51 (proton donor) is an active-site residue. Zn(2+)-binding residues include cysteine 74 and cysteine 83. Positions 145-371 (LPYVTLKAAA…KDGDDVYRNR (227 aa)) are reductase. Position 153 (alanine 153) interacts with NADP(+). Position 167 (serine 167) interacts with substrate. Residue tryptophan 169 participates in NADP(+) binding. Residue arginine 183 coordinates substrate. NADP(+)-binding residues include threonine 195 and aspartate 199. Substrate-binding residues include leucine 203 and arginine 206. Threonine 221 lines the NADP(+) pocket. Substrate is bound at residue glutamate 290. 292 to 298 (GASVHGS) lines the NADP(+) pocket.

This sequence in the N-terminal section; belongs to the cytidine and deoxycytidylate deaminase family. The protein in the C-terminal section; belongs to the HTP reductase family. Zn(2+) is required as a cofactor.

The catalysed reaction is 2,5-diamino-6-hydroxy-4-(5-phosphoribosylamino)-pyrimidine + H2O + H(+) = 5-amino-6-(5-phospho-D-ribosylamino)uracil + NH4(+). The enzyme catalyses 5-amino-6-(5-phospho-D-ribitylamino)uracil + NADP(+) = 5-amino-6-(5-phospho-D-ribosylamino)uracil + NADPH + H(+). It functions in the pathway cofactor biosynthesis; riboflavin biosynthesis; 5-amino-6-(D-ribitylamino)uracil from GTP: step 2/4. It participates in cofactor biosynthesis; riboflavin biosynthesis; 5-amino-6-(D-ribitylamino)uracil from GTP: step 3/4. Converts 2,5-diamino-6-(ribosylamino)-4(3h)-pyrimidinone 5'-phosphate into 5-amino-6-(ribosylamino)-2,4(1h,3h)-pyrimidinedione 5'-phosphate. The chain is Riboflavin biosynthesis protein RibD (ribD) from Bacillus amyloliquefaciens (Bacillus velezensis).